We begin with the raw amino-acid sequence, 350 residues long: Histidinol-phosphate aminotransferase 1 (350 aa).

Lys-210 is subject to N6-(pyridoxal phosphate)lysine.

The protein belongs to the class-II pyridoxal-phosphate-dependent aminotransferase family. Histidinol-phosphate aminotransferase subfamily. In terms of assembly, homodimer. The cofactor is pyridoxal 5'-phosphate.

It carries out the reaction L-histidinol phosphate + 2-oxoglutarate = 3-(imidazol-4-yl)-2-oxopropyl phosphate + L-glutamate. It functions in the pathway amino-acid biosynthesis; L-histidine biosynthesis; L-histidine from 5-phospho-alpha-D-ribose 1-diphosphate: step 7/9. This is Histidinol-phosphate aminotransferase 1 from Pseudomonas fluorescens (strain Pf0-1).